Consider the following 389-residue polypeptide: MNESSEANDLAIRRQIIDETKCVVVKVGTRVLTTSDGKLDLERVDRLAEQLCRIADTGRQTIMVSSGAVGAGVAKLGLPQRPTDLKSLQAIAAIGQADLIGAYEKSLQKRGRHAAQVLLTRNDLRRRSGYLHVRNALNGIDELGAIAVVNENDSVAVSELKTTFGDNDRLAAQVAGLFNDVMLILLTDVSALYDGHPDEKDSQPIHMVHDVDDGVMALVDDQVSTVSKGGMGGKLRASKLANSHGHPTIIGSGTEEFVLDRIFAGDAVGTLFVPPKRSLKGRRRWIGSSANVAGTLFLDQGAVDAIQKHGRSLLAIGIQRVEGTFAHGNVVRLVGPNGEEFGRGLSNYRSHEVARIAGKPSEQIEWILGHRPYENVIHRNNLVLRIVPE.

Lys-26 contributes to the ATP binding site. Substrate-binding residues include Ser-66, Asp-153, and Asn-167. 187-188 (TD) contacts ATP. The 79-residue stretch at 293 to 371 (AGTLFLDQGA…EQIEWILGHR (79 aa)) folds into the PUA domain.

Belongs to the glutamate 5-kinase family.

Its subcellular location is the cytoplasm. The catalysed reaction is L-glutamate + ATP = L-glutamyl 5-phosphate + ADP. It functions in the pathway amino-acid biosynthesis; L-proline biosynthesis; L-glutamate 5-semialdehyde from L-glutamate: step 1/2. Functionally, catalyzes the transfer of a phosphate group to glutamate to form L-glutamate 5-phosphate. The sequence is that of Glutamate 5-kinase from Rhodopirellula baltica (strain DSM 10527 / NCIMB 13988 / SH1).